Consider the following 385-residue polypeptide: Guanine nucleotide-binding protein alpha-5 subunit (385 aa).

Gly2 carries the N-myristoyl glycine lipid modification. The S-palmitoyl cysteine moiety is linked to residue Cys6. Positions 32–385 constitute a G-alpha domain; that stretch reads RKIKMLLLGI…NKNIETLSLE (354 aa). The interval 35–48 is G1 motif; the sequence is KMLLLGISDSGKST. GTP contacts are provided by residues 40–47, 174–180, 199–203, 298–301, and Ala357; these read GISDSGKS, IHMRQTT, DVGGQ, and NKID. Residues Ser47 and Thr180 each coordinate Mg(2+). Positions 172–180 are G2 motif; it reads DLIHMRQTT. Residues 195–204 form a G3 motif region; sequence IRLIDVGGQK. A G4 motif region spans residues 294–301; sequence MLFLNKID. The G5 motif stretch occupies residues 355 to 360; that stretch reads TQATIT.

This sequence belongs to the G-alpha family. In terms of assembly, g proteins are composed of 3 units; alpha, beta and gamma. The alpha chain contains the guanine nucleotide binding site.

Functionally, guanine nucleotide-binding proteins (G proteins) are involved as modulators or transducers in various transmembrane signaling systems. The sequence is that of Guanine nucleotide-binding protein alpha-5 subunit (gpa-5) from Caenorhabditis briggsae.